Here is a 230-residue protein sequence, read N- to C-terminus: 2,3-bisphosphoglycerate-dependent phosphoglycerate mutase (230 aa).

Substrate contacts are provided by residues 8 to 15, 21 to 22, R60, 87 to 90, K98, 114 to 115, and 183 to 184; these read RHGESEWN, TG, ERHY, RR, and GN. H9 acts as the Tele-phosphohistidine intermediate in catalysis. E87 serves as the catalytic Proton donor/acceptor.

It belongs to the phosphoglycerate mutase family. BPG-dependent PGAM subfamily.

The enzyme catalyses (2R)-2-phosphoglycerate = (2R)-3-phosphoglycerate. It functions in the pathway carbohydrate degradation; glycolysis; pyruvate from D-glyceraldehyde 3-phosphate: step 3/5. In terms of biological role, catalyzes the interconversion of 2-phosphoglycerate and 3-phosphoglycerate. In Streptococcus mutans serotype c (strain ATCC 700610 / UA159), this protein is 2,3-bisphosphoglycerate-dependent phosphoglycerate mutase.